Reading from the N-terminus, the 880-residue chain is Pyruvate, phosphate dikinase (880 aa).

The segment at 1–348 is N-terminal; the sequence is MNKLIYYFGN…LYILQTRTAK (348 aa). Residue R97 coordinates ATP. The segment at 349-405 is linker 1; it reads RTAIAAINIAVQMVEEKLISKEQALMRIDPESLNQLLHTRIDYSKKLTAIAEGLPAS. Residues 406 to 503 form a central region; that stretch reads PGAATGIVVF…VIKQGDIITI (98 aa). Residue T458 is modified to Phosphothreonine; by PDRP1. The active-site Tele-phosphohistidine intermediate is H460. Residues 504-538 are linker 2; sequence DGGSGKIFLGEMPLIQPTFSEESTLILDWADEISS. The C-terminal stretch occupies residues 539 to 879; that stretch reads LKVRANAETV…AAAQAKIKQG (341 aa). Substrate contacts are provided by R566, R622, E750, G771, T772, N773, and D774. E750 contacts Mg(2+). D774 contacts Mg(2+). The active-site Proton donor is C836.

The protein belongs to the PEP-utilizing enzyme family. As to quaternary structure, homodimer. Mg(2+) is required as a cofactor. In terms of processing, phosphorylation of Thr-458 in the dark inactivates the enzyme. Dephosphorylation upon light stimulation reactivates the enzyme.

It carries out the reaction pyruvate + phosphate + ATP = phosphoenolpyruvate + AMP + diphosphate + H(+). Its activity is regulated as follows. Activated by light-induced dephosphorylation. Inhibited by dark-induced phosphorylation. Both reactions are catalyzed by PDRP1. Its function is as follows. Catalyzes the reversible phosphorylation of pyruvate and phosphate. The polypeptide is Pyruvate, phosphate dikinase (ppdK) (Rickettsia typhi (strain ATCC VR-144 / Wilmington)).